Reading from the N-terminus, the 1191-residue chain is WASH complex subunit homolog 5 (1191 aa).

It belongs to the strumpellin family. In terms of assembly, component of the WASH complex.

It is found in the early endosome. In terms of biological role, acts at least in part as component of the WASH complex which may regulate wash nucleation-promoting factor (NPF) activity and is required for its membrane targeting during endosomal sorting. During embryogenesis, not involved in the wash-dependent developmental migration of hemocytes anteriorly from the tail. The polypeptide is WASH complex subunit homolog 5 (Drosophila melanogaster (Fruit fly)).